The primary structure comprises 20 residues: Astacin-like peptidase p18 (20 aa).

The 20-residue stretch at Asn-1 to Asp-20 folds into the Peptidase M12A domain.

Zn(2+) serves as cofactor.

In terms of biological role, active against casein. Has a role as a digestive enzyme. The protein is Astacin-like peptidase p18 of Argiope aurantia (Black-and-yellow garden spider).